A 526-amino-acid chain; its full sequence is Chaperonin GroEL, chloroplastic (526 aa).

ATP is bound by residues 29 to 32 (TLGP), 86 to 90 (DGTTT), Gly-412, 476 to 478 (DAA), and Asp-492.

It belongs to the chaperonin (HSP60) family. As to quaternary structure, forms a cylinder of 14 subunits composed of two heptameric rings stacked back-to-back. Interacts with the co-chaperonin GroES.

Its subcellular location is the plastid. The protein resides in the chloroplast. The enzyme catalyses ATP + H2O + a folded polypeptide = ADP + phosphate + an unfolded polypeptide.. Functionally, together with its co-chaperonin GroES, plays an essential role in assisting protein folding. The GroEL-GroES system forms a nano-cage that allows encapsulation of the non-native substrate proteins and provides a physical environment optimized to promote and accelerate protein folding. This Cyanidioschyzon merolae (strain NIES-3377 / 10D) (Unicellular red alga) protein is Chaperonin GroEL, chloroplastic.